We begin with the raw amino-acid sequence, 858 residues long: Elongation factor 2 (858 aa).

The tr-type G domain maps to 17–362; that stretch reads ANIRNMSVIA…MITIHLPSPV (346 aa). 26–33 contributes to the GTP binding site; it reads AHVDHGKS. Position 54 is a phosphothreonine (threonine 54). Threonine 57 bears the Phosphothreonine; by EEF2K mark. Threonine 59 carries the phosphothreonine modification. Lysine 152 is modified (N6-succinyllysine). GTP-binding positions include 158–161 and 216–218; these read NKMD and SGL. Lysine 235 is subject to N6-acetyllysine. Lysine 239 carries the post-translational modification N6-acetyllysine; alternate. Residue lysine 239 forms a Glycyl lysine isopeptide (Lys-Gly) (interchain with G-Cter in SUMO1); alternate linkage. At tyrosine 265 the chain carries Phosphotyrosine; by CSK. Lysine 272 bears the N6-acetyllysine; alternate mark. Position 272 is an N6-succinyllysine; alternate (lysine 272). Position 275 is an N6-acetyllysine (lysine 275). Residue lysine 322 forms a Glycyl lysine isopeptide (Lys-Gly) (interchain with G-Cter in SUMO) linkage. Phosphoserine is present on serine 325. Residue tyrosine 373 is modified to Phosphotyrosine; by CSK. Threonine 435 is subject to Phosphothreonine. An N6-acetyllysine mark is found at lysine 439 and lysine 445. Serine 502 is subject to Phosphoserine. Residue lysine 525 is modified to N6,N6,N6-trimethyllysine; by EEF2KMT. A Glycyl lysine isopeptide (Lys-Gly) (interchain with G-Cter in SUMO) cross-link involves residue lysine 529. Lysine 572 bears the N6-succinyllysine mark. Position 595 is a phosphoserine; by CDK2 (serine 595). Lysine 619 is subject to N6-acetyllysine. Histidine 715 carries the diphthamide modification.

Belongs to the TRAFAC class translation factor GTPase superfamily. Classic translation factor GTPase family. EF-G/EF-2 subfamily. Binds to 80S ribosomes. Actively translating ribosomes show mutually exclusive binding of eIF5a (EIF5A or EIF5A2) and EEF2/eEF2. Interacts with SERBP1; interaction sequesters EEF2/eEF2 at the A-site of the ribosome, thereby blocking the interaction sites of the mRNA-tRNA complex, promoting ribosome stabilization and hibernation. Interacts with HABP4; interaction takes place at the A-site of hibernating ribosomes and promotes ribosome stabilization. Component of the mRNA surveillance SURF complex, at least composed of ERF1, ERF3 (ERF3A or ERF3B), EEF2, UPF1/RENT1, SMG1, SMG8 and SMG9. Interacts with RBPMS2. Diphthamide is 2-[3-carboxyamido-3-(trimethyl-ammonio)propyl]histidine. In terms of processing, phosphorylation by EF-2 kinase completely inactivates EF-2; it requires prior phosphorylation by CDK2 at Ser-595 during mitotic prometaphase. Phosphorylation by CSK promotes SUMOylation, proteolytic cleavage, and nuclear translocation if the C-terminal fragment. Post-translationally, proteolytically processed at two sites following phosphorylation by CSK. SUMOylated following phosphorylation by CSK, promotes proteolytic cleavage. In terms of processing, ISGylated.

It localises to the cytoplasm. The protein resides in the nucleus. The enzyme catalyses GTP + H2O = GDP + phosphate + H(+). Catalyzes the GTP-dependent ribosomal translocation step during translation elongation. During this step, the ribosome changes from the pre-translocational (PRE) to the post-translocational (POST) state as the newly formed A-site-bound peptidyl-tRNA and P-site-bound deacylated tRNA move to the P and E sites, respectively. Catalyzes the coordinated movement of the two tRNA molecules, the mRNA and conformational changes in the ribosome. The sequence is that of Elongation factor 2 (Eef2) from Rattus norvegicus (Rat).